We begin with the raw amino-acid sequence, 98 residues long: Defensin-B (98 aa).

The first 20 residues, 1–20, serve as a signal peptide directing secretion; that stretch reads MKSITVICFLALCTVAITSA. Positions 21–58 are excised as a propeptide; that stretch reads YPQEPVLADEARPFANSLFDELPEETYQAAVENFRLKR. Cystine bridges form between Cys61/Cys88, Cys74/Cys94, and Cys78/Cys96.

Belongs to the invertebrate defensin family. Type 1 subfamily.

It localises to the secreted. Functionally, antibacterial peptide mostly active against Gram-positive bacteria. This is Defensin-B (DEFB) from Aedes aegypti (Yellowfever mosquito).